The chain runs to 405 residues: Acetylornithine/succinyldiaminopimelate aminotransferase (405 aa).

Residues 107-108 (GA) and Phe140 each bind pyridoxal 5'-phosphate. Arg143 serves as a coordination point for N(2)-acetyl-L-ornithine. 225–228 (DEVQ) is a binding site for pyridoxal 5'-phosphate. Lys254 carries the post-translational modification N6-(pyridoxal phosphate)lysine. Thr282 serves as a coordination point for N(2)-acetyl-L-ornithine. Residue Thr283 coordinates pyridoxal 5'-phosphate.

The protein belongs to the class-III pyridoxal-phosphate-dependent aminotransferase family. ArgD subfamily. Homodimer. It depends on pyridoxal 5'-phosphate as a cofactor.

The protein resides in the cytoplasm. The enzyme catalyses N(2)-acetyl-L-ornithine + 2-oxoglutarate = N-acetyl-L-glutamate 5-semialdehyde + L-glutamate. It catalyses the reaction N-succinyl-(2S,6S)-2,6-diaminopimelate + 2-oxoglutarate = (S)-2-succinylamino-6-oxoheptanedioate + L-glutamate. Its pathway is amino-acid biosynthesis; L-arginine biosynthesis; N(2)-acetyl-L-ornithine from L-glutamate: step 4/4. It participates in amino-acid biosynthesis; L-lysine biosynthesis via DAP pathway; LL-2,6-diaminopimelate from (S)-tetrahydrodipicolinate (succinylase route): step 2/3. Involved in both the arginine and lysine biosynthetic pathways. In Yersinia pestis, this protein is Acetylornithine/succinyldiaminopimelate aminotransferase.